We begin with the raw amino-acid sequence, 225 residues long: MAGHDSGNARRGRASFGAFVRKPVERDAVANAGQAAEQGSLEEAQAWPDDAVEVGAVVDAYGLKGWVKVATHADAGRGGDALLKARHWWLERGAERLSVRIMQSKAHSDTVVAQPAGVSDRDAAFAMRGFRVFVRREDFPALAADEFYWVDLIGLDVVNEQSVALGKVSGMIDNGVHSIMRVEYPATGKDGQPTTDERLIPFVGVYVKTVDQAARRIVVDWEADY.

A PRC barrel domain is found at 144–225; that stretch reads ADEFYWVDLI…RIVVDWEADY (82 aa).

It belongs to the RimM family. In terms of assembly, binds ribosomal protein uS19.

Its subcellular location is the cytoplasm. Functionally, an accessory protein needed during the final step in the assembly of 30S ribosomal subunit, possibly for assembly of the head region. Essential for efficient processing of 16S rRNA. May be needed both before and after RbfA during the maturation of 16S rRNA. It has affinity for free ribosomal 30S subunits but not for 70S ribosomes. This chain is Ribosome maturation factor RimM, found in Burkholderia lata (strain ATCC 17760 / DSM 23089 / LMG 22485 / NCIMB 9086 / R18194 / 383).